The following is a 247-amino-acid chain: Adenosylcobinamide-GDP ribazoletransferase (247 aa).

5 helical membrane-spanning segments follow: residues isoleucine 34 to leucine 54, cysteine 59 to phenylalanine 79, glycine 113 to leucine 133, methionine 138 to tyrosine 158, and valine 194 to isoleucine 214.

It belongs to the CobS family. Mg(2+) serves as cofactor.

Its subcellular location is the cell inner membrane. The enzyme catalyses alpha-ribazole + adenosylcob(III)inamide-GDP = adenosylcob(III)alamin + GMP + H(+). The catalysed reaction is alpha-ribazole 5'-phosphate + adenosylcob(III)inamide-GDP = adenosylcob(III)alamin 5'-phosphate + GMP + H(+). The protein operates within cofactor biosynthesis; adenosylcobalamin biosynthesis; adenosylcobalamin from cob(II)yrinate a,c-diamide: step 7/7. In terms of biological role, joins adenosylcobinamide-GDP and alpha-ribazole to generate adenosylcobalamin (Ado-cobalamin). Also synthesizes adenosylcobalamin 5'-phosphate from adenosylcobinamide-GDP and alpha-ribazole 5'-phosphate. The sequence is that of Adenosylcobinamide-GDP ribazoletransferase from Salmonella typhi.